The following is a 465-amino-acid chain: tRNA modification GTPase MnmE (465 aa).

Positions 30, 92, and 132 each coordinate (6S)-5-formyl-5,6,7,8-tetrahydrofolate. Residues 227–388 (GLQVALVGRP…LIEAVLKTCG (162 aa)) form the TrmE-type G domain. Residue N237 coordinates K(+). GTP contacts are provided by residues 237–242 (NVGKSS), 256–262 (TDLPGTT), 281–284 (DTAG), and 342–345 (NKAD). S241 is a Mg(2+) binding site. K(+)-binding residues include T256, L258, and T261. T262 contributes to the Mg(2+) binding site. K465 is a binding site for (6S)-5-formyl-5,6,7,8-tetrahydrofolate.

It belongs to the TRAFAC class TrmE-Era-EngA-EngB-Septin-like GTPase superfamily. TrmE GTPase family. As to quaternary structure, homodimer. Heterotetramer of two MnmE and two MnmG subunits. K(+) serves as cofactor.

It localises to the cytoplasm. Exhibits a very high intrinsic GTPase hydrolysis rate. Involved in the addition of a carboxymethylaminomethyl (cmnm) group at the wobble position (U34) of certain tRNAs, forming tRNA-cmnm(5)s(2)U34. This is tRNA modification GTPase MnmE from Prochlorococcus marinus (strain MIT 9303).